Here is a 98-residue protein sequence, read N- to C-terminus: Large ribosomal subunit protein uL23 (98 aa).

Belongs to the universal ribosomal protein uL23 family. In terms of assembly, part of the 50S ribosomal subunit. Contacts protein L29, and trigger factor when it is bound to the ribosome.

Functionally, one of the early assembly proteins it binds 23S rRNA. One of the proteins that surrounds the polypeptide exit tunnel on the outside of the ribosome. Forms the main docking site for trigger factor binding to the ribosome. The polypeptide is Large ribosomal subunit protein uL23 (Rickettsia peacockii (strain Rustic)).